The sequence spans 569 residues: MSDQLADQLKATSLSSGPEDWKKGLNLPARDTRQQTEDVTNTRGLDWEDFIHDRDLLMGIFEAGFEKPSPIQEEAIPVALTGRDILARAKNGTGKTAAFVIPALNKINPKVSKIQCLILVPTRELAMQTSQVCKTLGKHLGINVMVTTGGTGLRDDIVRLQDPVHIVVGTPGRILDLAGKQVADLSECPMFIMDEADKLLSQEFTPVIEQLLQFHPKDRQVMLFSATFPLSVKDFSDKNMTSPYEINLMDELTLRGITQYYAFVEEKQKVHCLNTLFSKLQINQSIIFCNSTNRVELLAKKITELGYSCFYSHAKMAQQARNRVFHDFRNGVCRNLVCSDLLTRGIDIQAVNVVINFDFPKNAETYLHRIGRSGRYGHLGLAINLINWDDRFNLYNIERDLGTEIQPIPQTIDKSLYVYENPESIPRPISTFKPIAQQPQQQLQQSQRPQQSQQQQHFSTQTQPSNQLPPQQGNQQLGFNPQAQQPHRPIPQAQGDWQGQNGRQNGTGASNNQPRPTNYQNNRGQPGSSRGGRGRGFQGQGGRQNQNYGGQRGPRTQGQGQPQGPLSAQ.

A compositionally biased stretch (polar residues) spans 1–16; that stretch reads MSDQLADQLKATSLSS. Positions 1 to 39 are disordered; sequence MSDQLADQLKATSLSSGPEDWKKGLNLPARDTRQQTEDV. The Q motif signature appears at 45-73; sequence LDWEDFIHDRDLLMGIFEAGFEKPSPIQE. The Helicase ATP-binding domain maps to 76–246; it reads IPVALTGRDI…DKNMTSPYEI (171 aa). 89 to 96 lines the ATP pocket; that stretch reads AKNGTGKT. A DEAD box motif is present at residues 194-197; sequence DEAD. Positions 256–416 constitute a Helicase C-terminal domain; it reads GITQYYAFVE…PIPQTIDKSL (161 aa). Positions 436 to 569 are disordered; it reads AQQPQQQLQQ…GQPQGPLSAQ (134 aa). The span at 437-482 shows a compositional bias: low complexity; sequence QQPQQQLQQSQRPQQSQQQQHFSTQTQPSNQLPPQQGNQQLGFNPQ. Positions 495–520 are enriched in polar residues; it reads GDWQGQNGRQNGTGASNNQPRPTNYQ. Positions 529–542 are enriched in gly residues; that stretch reads SRGGRGRGFQGQGG. The span at 543 to 569 shows a compositional bias: low complexity; it reads RQNQNYGGQRGPRTQGQGQPQGPLSAQ.

Belongs to the DEAD box helicase family. DDX6/DHH1 subfamily.

The protein localises to the cytoplasm. The protein resides in the P-body. It carries out the reaction ATP + H2O = ADP + phosphate + H(+). In terms of biological role, ATP-dependent RNA helicase involved in mRNA turnover, and more specifically in mRNA decapping. Is involved in G1/S DNA-damage checkpoint recovery, probably through the regulation of the translational status of a subset of mRNAs. May also have a role in translation and mRNA nuclear export. This Neurospora crassa (strain ATCC 24698 / 74-OR23-1A / CBS 708.71 / DSM 1257 / FGSC 987) protein is ATP-dependent RNA helicase dhh1 (drh-10).